The sequence spans 326 residues: Cell surface glycoprotein CD200 receptor 1 (326 aa).

Residues 1 to 25 (MFCFWRTSALAVLLIWGVFVAGSSC) form the signal peptide. The Extracellular segment spans residues 26-238 (TDKNQTTQNN…SRGGNQSLRP (213 aa)). Residues Asn29, Asn34, Asn35, Asn44, Asn93, Asn101, Asn159, Asn192, Asn207, Asn221, and Asn233 are each glycosylated (N-linked (GlcNAc...) asparagine). An Ig-like V-type domain is found at 51–136 (IGTKALLCCF…YTCETVTPEG (86 aa)). 2 disulfide bridges follow: Cys58–Cys129 and Cys82–Cys97. Residues 138 to 229 (FEKNYDLQVL…GNQSLSIELS (92 aa)) enclose the Ig-like C2-type domain. 2 cysteine pairs are disulfide-bonded: Cys164–Cys213 and Cys183–Cys201. A helical membrane pass occupies residues 239–259 (YIPYIIPSIIILIIIGCICLL). The Cytoplasmic segment spans residues 260 to 326 (KISGFRKCKL…DCLTLSAIGI (67 aa)).

The protein belongs to the CD200R family. In terms of assembly, CD200 and CD200R1 interact via their respective N-terminal Ig-like domains. As to expression, expressed in granulocytes, monocytes, most T-cells and a subset of NK, NKT and B-cells (at protein level). Expressed in the spleen, lung, liver, testis, bone marrow, lymph nodes, spinal cord, kidney, uterus and small intestine. Expressed in mast and dendritic cells. Expressed in the lung of N.brasiliensis-infected mice.

It localises to the cell membrane. Inhibitory receptor for the CD200/OX2 cell surface glycoprotein. Limits inflammation by inhibiting the expression of pro-inflammatory molecules including TNF-alpha, interferons, and inducible nitric oxide synthase (iNOS) in response to selected stimuli. The protein is Cell surface glycoprotein CD200 receptor 1 (Cd200r1) of Mus musculus (Mouse).